Reading from the N-terminus, the 236-residue chain is Small ribosomal subunit protein uS2c (236 aa).

This sequence belongs to the universal ribosomal protein uS2 family.

The protein localises to the plastid. Its subcellular location is the chloroplast. This is Small ribosomal subunit protein uS2c (rps2) from Crucihimalaya wallichii (Rock-cress).